We begin with the raw amino-acid sequence, 325 residues long: Tagatose 1,6-diphosphate aldolase 1 (325 aa).

The protein belongs to the aldolase LacD family.

It catalyses the reaction D-tagatofuranose 1,6-bisphosphate = D-glyceraldehyde 3-phosphate + dihydroxyacetone phosphate. It functions in the pathway carbohydrate metabolism; D-tagatose 6-phosphate degradation; D-glyceraldehyde 3-phosphate and glycerone phosphate from D-tagatose 6-phosphate: step 2/2. The sequence is that of Tagatose 1,6-diphosphate aldolase 1 (lacD1) from Streptococcus pyogenes serotype M1.